Consider the following 284-residue polypeptide: ATP synthase gamma chain (284 aa).

This sequence belongs to the ATPase gamma chain family. In terms of assembly, F-type ATPases have 2 components, CF(1) - the catalytic core - and CF(0) - the membrane proton channel. CF(1) has five subunits: alpha(3), beta(3), gamma(1), delta(1), epsilon(1). CF(0) has three main subunits: a, b and c.

The protein localises to the cell membrane. Its function is as follows. Produces ATP from ADP in the presence of a proton gradient across the membrane. The gamma chain is believed to be important in regulating ATPase activity and the flow of protons through the CF(0) complex. The chain is ATP synthase gamma chain from Pelotomaculum thermopropionicum (strain DSM 13744 / JCM 10971 / SI).